The sequence spans 362 residues: tRNA-specific 2-thiouridylase MnmA 3 (362 aa).

Residues 11–18 and Met-37 each bind ATP; that span reads GMSGGIDS. The active-site Nucleophile is Cys-91. Residues Cys-91 and Cys-188 are joined by a disulfide bond. ATP is bound at residue Gly-115. The segment at 137-139 is interaction with tRNA; it reads KDQ. The Cysteine persulfide intermediate role is filled by Cys-188. The interval 296–297 is interaction with tRNA; that stretch reads RY.

It belongs to the MnmA/TRMU family.

Its subcellular location is the cytoplasm. It catalyses the reaction S-sulfanyl-L-cysteinyl-[protein] + uridine(34) in tRNA + AH2 + ATP = 2-thiouridine(34) in tRNA + L-cysteinyl-[protein] + A + AMP + diphosphate + H(+). Catalyzes the 2-thiolation of uridine at the wobble position (U34) of tRNA, leading to the formation of s(2)U34. The chain is tRNA-specific 2-thiouridylase MnmA 3 from Bacteroides fragilis (strain ATCC 25285 / DSM 2151 / CCUG 4856 / JCM 11019 / LMG 10263 / NCTC 9343 / Onslow / VPI 2553 / EN-2).